Reading from the N-terminus, the 1380-residue chain is DNA-directed RNA polymerase subunit beta (1380 aa).

Belongs to the RNA polymerase beta chain family. As to quaternary structure, the RNAP catalytic core consists of 2 alpha, 1 beta, 1 beta' and 1 omega subunit. When a sigma factor is associated with the core the holoenzyme is formed, which can initiate transcription.

The enzyme catalyses RNA(n) + a ribonucleoside 5'-triphosphate = RNA(n+1) + diphosphate. Its function is as follows. DNA-dependent RNA polymerase catalyzes the transcription of DNA into RNA using the four ribonucleoside triphosphates as substrates. The chain is DNA-directed RNA polymerase subunit beta from Sinorhizobium medicae (strain WSM419) (Ensifer medicae).